The primary structure comprises 397 residues: Elongation factor Tu (397 aa).

A tr-type G domain is found at 10–207 (KPHCNIGTIG…EVDKYIPQPE (198 aa)). The interval 19–26 (GHVDHGKT) is G1. Residue 19–26 (GHVDHGKT) participates in GTP binding. Thr-26 is a Mg(2+) binding site. A G2 region spans residues 61–65 (GITIS). Residues 82–85 (DCPG) form a G3 region. GTP contacts are provided by residues 82–86 (DCPGH) and 137–140 (NKCD). Positions 137-140 (NKCD) are G4. Residues 175–177 (SAL) form a G5 region.

The protein belongs to the TRAFAC class translation factor GTPase superfamily. Classic translation factor GTPase family. EF-Tu/EF-1A subfamily. Monomer.

The protein resides in the cytoplasm. It carries out the reaction GTP + H2O = GDP + phosphate + H(+). Functionally, GTP hydrolase that promotes the GTP-dependent binding of aminoacyl-tRNA to the A-site of ribosomes during protein biosynthesis. This Azorhizobium caulinodans (strain ATCC 43989 / DSM 5975 / JCM 20966 / LMG 6465 / NBRC 14845 / NCIMB 13405 / ORS 571) protein is Elongation factor Tu.